We begin with the raw amino-acid sequence, 839 residues long: Taste receptor type 1 member 2 (839 aa).

A signal peptide spans 1–19 (MGTRATTICSLFFLLWVLA). Topologically, residues 20 to 566 (EPAENSDFYL…VFLEWHEAPT (547 aa)) are extracellular. 9 N-linked (GlcNAc...) asparagine glycosylation sites follow: Asn84, Asn248, Asn292, Asn312, Asn368, Asn407, Asn428, Asn487, and Asn527. The chain crosses the membrane as a helical span at residues 567-587 (IAVALLAALGFLSTLAILVIF). The Cytoplasmic segment spans residues 588-602 (WRHFQTPIVRSAGGP). The helical transmembrane segment at 603 to 623 (MCFLMLTLLLVAYMVVPVYVG) threads the bilayer. Topologically, residues 624-635 (PPKVSTCLCRQA) are extracellular. Residues 636-656 (LFPLCFTICISCIAVRSFQIV) form a helical membrane-spanning segment. The Cytoplasmic segment spans residues 657-681 (CAFKMASRFPRAYSYWVRYQGPYVS). A helical membrane pass occupies residues 682 to 702 (MAFITVLKMVIVVIGMLATGL). Residues 703 to 727 (SPTTRTDPDDPKITIVSCNPNYRNS) lie on the Extracellular side of the membrane. Residues 728–748 (LLFNTSLDLLLSVVGFSFAYM) traverse the membrane as a helical segment. The Cytoplasmic segment spans residues 749 to 760 (GKELPTNYNEAK). A helical membrane pass occupies residues 761–781 (FITLSMTFYFTSSVSLCTFMS). Residues 782–784 (AYS) are Extracellular-facing. Residues 785–805 (GVLVTIVDLLVTVLNLLAISL) form a helical membrane-spanning segment. Residues 806–839 (GYFGPKCYMILFYPERNTPAYFNSMIQGYTMRRD) are Cytoplasmic-facing.

The protein belongs to the G-protein coupled receptor 3 family. TAS1R subfamily. As to quaternary structure, forms heterodimers with TAS1R3.

It localises to the cell membrane. Its function is as follows. Putative taste receptor. TAS1R2/TAS1R3 recognizes diverse natural and synthetic sweeteners. The protein is Taste receptor type 1 member 2 (TAS1R2) of Gorilla gorilla gorilla (Western lowland gorilla).